The sequence spans 198 residues: Suppressor of cytokine signaling 2 (198 aa).

Residues 1–75 are interaction with AREL1; it reads MTLRCLESSG…PEGTFLIRDS (75 aa). Positions 6-30 are disordered; sequence LESSGNGAEGAQSQWGTAGSAEEPS. Polar residues predominate over residues 8 to 22; sequence SSGNGAEGAQSQWGT. Phosphoserine occurs at positions 30 and 52. The SH2 domain occupies 48–156; it reads WYWGSMTVNE…TVHLYLTKPL (109 aa). One can recognise an SOCS box domain in the interval 151–197; sequence YLTKPLYTSAPPLQHLCRLTINKCTSTVWGLPLPTRLKDYLEEYKFQ. Lys-173 is covalently cross-linked (Glycyl lysine isopeptide (Lys-Gly) (interchain with G-Cter in ubiquitin)).

Substrate-recognition component of the ECS(SOCS2) complex, composed of SOCS2, CUL5, ELOB, ELOC and RNF7/RBX2. Interacts with IGF1R. Interacts with DCUN1D1. In terms of processing, ubiquitinated; mediated by AREL1 and leading to its subsequent proteasomal degradation. Ubiquitination is dependent on its phosphorylation at Ser-52, by PKC. Ubiquitination is stimulated by LPS. Phosphorylation at Ser-52 by PKC facilitates its ubiquitination and proteasomal degradation.

The protein localises to the cytoplasm. The protein operates within protein modification; protein ubiquitination. In terms of biological role, substrate-recognition component of a cullin-5-RING E3 ubiquitin-protein ligase complex (ECS complex, also named CRL5 complex), which mediates the ubiquitination and subsequent proteasomal degradation of target proteins, such as EPOR and GHR. Specifically recognizes and binds phosphorylated proteins via its SH2 domain, promoting their ubiquitination. The ECS(SOCS2) complex acts as a key regulator of growth hormone receptor (GHR) levels by mediating ubiquitination and degradation of GHR, following GHR phosphorylation by JAK2. The ECS(SOCS2) also catalyzes ubiquitination and degradation of JAK2-phosphorylated EPOR. The polypeptide is Suppressor of cytokine signaling 2 (SOCS2) (Bos taurus (Bovine)).